Reading from the N-terminus, the 259-residue chain is Leucyl/phenylalanyl-tRNA--protein transferase (259 aa).

Belongs to the L/F-transferase family.

The protein localises to the cytoplasm. The enzyme catalyses N-terminal L-lysyl-[protein] + L-leucyl-tRNA(Leu) = N-terminal L-leucyl-L-lysyl-[protein] + tRNA(Leu) + H(+). It carries out the reaction N-terminal L-arginyl-[protein] + L-leucyl-tRNA(Leu) = N-terminal L-leucyl-L-arginyl-[protein] + tRNA(Leu) + H(+). The catalysed reaction is L-phenylalanyl-tRNA(Phe) + an N-terminal L-alpha-aminoacyl-[protein] = an N-terminal L-phenylalanyl-L-alpha-aminoacyl-[protein] + tRNA(Phe). Functionally, functions in the N-end rule pathway of protein degradation where it conjugates Leu, Phe and, less efficiently, Met from aminoacyl-tRNAs to the N-termini of proteins containing an N-terminal arginine or lysine. This is Leucyl/phenylalanyl-tRNA--protein transferase from Teredinibacter turnerae (strain ATCC 39867 / T7901).